The following is a 90-amino-acid chain: Small ribosomal subunit protein bS20 (90 aa).

Positions 1 to 11 are enriched in basic residues; it reads MAHHKSAKKRI. Residues 1–22 are disordered; it reads MAHHKSAKKRIRQTERRTEVNR. A compositionally biased stretch (basic and acidic residues) spans 12 to 22; that stretch reads RQTERRTEVNR.

This sequence belongs to the bacterial ribosomal protein bS20 family.

Functionally, binds directly to 16S ribosomal RNA. The sequence is that of Small ribosomal subunit protein bS20 from Paramagnetospirillum magneticum (strain ATCC 700264 / AMB-1) (Magnetospirillum magneticum).